The following is a 166-amino-acid chain: Large ribosomal subunit protein uL10 (166 aa).

It belongs to the universal ribosomal protein uL10 family. In terms of assembly, part of the ribosomal stalk of the 50S ribosomal subunit. The N-terminus interacts with L11 and the large rRNA to form the base of the stalk. The C-terminus forms an elongated spine to which L12 dimers bind in a sequential fashion forming a multimeric L10(L12)X complex.

Forms part of the ribosomal stalk, playing a central role in the interaction of the ribosome with GTP-bound translation factors. The protein is Large ribosomal subunit protein uL10 of Pelagibacter ubique (strain HTCC1062).